A 247-amino-acid chain; its full sequence is Probable transcriptional regulatory protein lpl1249 (247 aa).

It belongs to the TACO1 family.

Its subcellular location is the cytoplasm. The polypeptide is Probable transcriptional regulatory protein lpl1249 (Legionella pneumophila (strain Lens)).